The primary structure comprises 178 residues: MDEILEEELEKKESEEFEERIVEIRRTAKVTKGGKTLSFRVLAVVGNRKGKVGVGVGKAREVPEAIRKAIAAARASVVEIPLYKTTIPHEVFGRQDASKVLLRPAAPGTGIIAGSTVRAVVELAGVQNVLTKCLGSTASVNLALATLNGLKDLVSPEKAAKLRDITPAQVLYGARKEA.

One can recognise an S5 DRBM domain in the interval Phe17–Ile80.

This sequence belongs to the universal ribosomal protein uS5 family. Part of the 30S ribosomal subunit. Contacts proteins S4 and S8.

With S4 and S12 plays an important role in translational accuracy. Functionally, located at the back of the 30S subunit body where it stabilizes the conformation of the head with respect to the body. The sequence is that of Small ribosomal subunit protein uS5 from Pseudothermotoga lettingae (strain ATCC BAA-301 / DSM 14385 / NBRC 107922 / TMO) (Thermotoga lettingae).